We begin with the raw amino-acid sequence, 348 residues long: NADH-ubiquinone oxidoreductase chain 2 (348 aa).

A run of 11 helical transmembrane segments spans residues 1–21 (MMTLILILGIFLGTMTTMFSS), 23–43 (WFFAWLGLEINMMAIIPMMLF), 56–76 (YFISQAVASSTIILASSWNYF), 92–112 (ITLIILALLLKLGLAPLHFWL), 123–143 (MGLIISTWQKLAPLTLLIQVS), 148–168 (NMYILISISVMSVLAGGFGGL), 176–196 (LLAYSSISHMGWIVGVMAVSA), 198–218 (LSWVTTVIYLIINFSIFTILI), 242–262 (CILVLLSLGGLPPFTGFFLKL), 272–292 (SLILMTILLMAGSLISLFFYL), and 321–341 (LLFNLMFLFSILLLPLSPFMI).

Belongs to the complex I subunit 2 family.

The protein resides in the mitochondrion inner membrane. It carries out the reaction a ubiquinone + NADH + 5 H(+)(in) = a ubiquinol + NAD(+) + 4 H(+)(out). Core subunit of the mitochondrial membrane respiratory chain NADH dehydrogenase (Complex I) that is believed to belong to the minimal assembly required for catalysis. Complex I functions in the transfer of electrons from NADH to the respiratory chain. The immediate electron acceptor for the enzyme is believed to be ubiquinone. The chain is NADH-ubiquinone oxidoreductase chain 2 (MT-ND2) from Myxine glutinosa (Atlantic hagfish).